Reading from the N-terminus, the 403-residue chain is 5,7-dihydroxy-2-methylchromone synthase (403 aa).

Position 68 (histidine 68) interacts with CoA. The active site involves cysteine 174. Cysteine 174 bears the Cysteine sulfinic acid (-SO2H) mark. Residues leucine 277, serine 281, and 318 to 321 (GGRA) contribute to the CoA site.

It belongs to the thiolase-like superfamily. Chalcone/stilbene synthases family. Homodimer.

The catalysed reaction is 5 malonyl-CoA + 4 H(+) = 5,7-dihydroxy-2-methyl-4H-chromen-4-one + 5 CO2 + 5 CoA + H2O. Its pathway is secondary metabolite biosynthesis; flavonoid biosynthesis. Catalyzes the iterative condensations of 5 molecules of malonyl-CoA to produce a pentaketide 5,7-dihydroxy-2-methylchromone. This is 5,7-dihydroxy-2-methylchromone synthase from Aloe arborescens (Kidachi aloe).